Here is a 407-residue protein sequence, read N- to C-terminus: Peptidase T (407 aa).

Residue H82 participates in Zn(2+) binding. Residue D84 is part of the active site. D143 provides a ligand contact to Zn(2+). The active-site Proton acceptor is E177. E178, D200, and H382 together coordinate Zn(2+).

The protein belongs to the peptidase M20B family. Requires Zn(2+) as cofactor.

It is found in the cytoplasm. The catalysed reaction is Release of the N-terminal residue from a tripeptide.. Cleaves the N-terminal amino acid of tripeptides. The sequence is that of Peptidase T from Streptococcus uberis (strain ATCC BAA-854 / 0140J).